Here is a 384-residue protein sequence, read N- to C-terminus: Putative RNA methyltransferase slr0064 (384 aa).

A THUMP domain is found at 53 to 164; that stretch reads LLYRINLWSR…QNHCQLSLDS (112 aa).

The protein belongs to the methyltransferase superfamily.

The protein is Putative RNA methyltransferase slr0064 of Synechocystis sp. (strain ATCC 27184 / PCC 6803 / Kazusa).